A 111-amino-acid polypeptide reads, in one-letter code: UPF0342 protein gbs1446 (111 aa).

This sequence belongs to the UPF0342 family.

The polypeptide is UPF0342 protein gbs1446 (Streptococcus agalactiae serotype III (strain NEM316)).